The sequence spans 210 residues: Probable sporulation protein YtaF (210 aa).

The next 6 membrane-spanning stretches (helical) occupy residues I6–L26, I36–F56, L69–A89, V129–A149, V162–F184, and W190–L210.

Its subcellular location is the cell membrane. The sequence is that of Probable sporulation protein YtaF (ytaF) from Bacillus subtilis (strain 168).